The primary structure comprises 92 residues: Large ribosomal subunit protein bL25 (92 aa).

This sequence belongs to the bacterial ribosomal protein bL25 family. As to quaternary structure, part of the 50S ribosomal subunit; part of the 5S rRNA/L5/L18/L25 subcomplex. Contacts the 5S rRNA. Binds to the 5S rRNA independently of L5 and L18.

This is one of the proteins that binds to the 5S RNA in the ribosome where it forms part of the central protuberance. The sequence is that of Large ribosomal subunit protein bL25 from Aliivibrio fischeri (strain MJ11) (Vibrio fischeri).